The following is a 149-amino-acid chain: Large ribosomal subunit protein uL22 (149 aa).

Belongs to the universal ribosomal protein uL22 family. In terms of assembly, part of the 50S ribosomal subunit.

This protein binds specifically to 23S rRNA. It makes multiple contacts with different domains of the 23S rRNA in the assembled 50S subunit and ribosome. In terms of biological role, the globular domain of the protein is located near the polypeptide exit tunnel on the outside of the subunit, while an extended beta-hairpin is found that lines the wall of the exit tunnel in the center of the 70S ribosome. The sequence is that of Large ribosomal subunit protein uL22 from Picrophilus torridus (strain ATCC 700027 / DSM 9790 / JCM 10055 / NBRC 100828 / KAW 2/3).